The sequence spans 325 residues: NADH-quinone oxidoreductase subunit H (325 aa).

Helical transmembrane passes span 11–31 (ILIS…CGAF), 81–101 (VIFT…FAIV), 114–134 (IGIL…LFAG), 149–169 (ASAQ…GVVA), 186–206 (MWNV…GVAV), 237–257 (FFVG…TLFF), 265–285 (LPPF…FILI), and 304–324 (VCLP…LYNA).

It belongs to the complex I subunit 1 family. In terms of assembly, NDH-1 is composed of 13 different subunits. Subunits NuoA, H, J, K, L, M, N constitute the membrane sector of the complex.

It localises to the cell inner membrane. The enzyme catalyses a quinone + NADH + 5 H(+)(in) = a quinol + NAD(+) + 4 H(+)(out). Its function is as follows. NDH-1 shuttles electrons from NADH, via FMN and iron-sulfur (Fe-S) centers, to quinones in the respiratory chain. The immediate electron acceptor for the enzyme in this species is believed to be ubiquinone. Couples the redox reaction to proton translocation (for every two electrons transferred, four hydrogen ions are translocated across the cytoplasmic membrane), and thus conserves the redox energy in a proton gradient. This subunit may bind ubiquinone. The polypeptide is NADH-quinone oxidoreductase subunit H (Serratia proteamaculans (strain 568)).